Reading from the N-terminus, the 22-residue chain is uncharacterized protein (22 aa).

Residues Met3 to Gly22 traverse the membrane as a helical segment.

Belongs to the asfivirus C84L family.

It localises to the host membrane. This is an uncharacterized protein from Ornithodoros (relapsing fever ticks).